A 184-amino-acid chain; its full sequence is Large ribosomal subunit protein uL18 (184 aa).

The protein belongs to the universal ribosomal protein uL18 family. Part of the 50S ribosomal subunit. Contacts the 5S and 23S rRNAs.

This is one of the proteins that bind and probably mediate the attachment of the 5S RNA into the large ribosomal subunit, where it forms part of the central protuberance. The chain is Large ribosomal subunit protein uL18 from Haloferax mediterranei (strain ATCC 33500 / DSM 1411 / JCM 8866 / NBRC 14739 / NCIMB 2177 / R-4) (Halobacterium mediterranei).